The following is a 109-amino-acid chain: Putative double-stranded DNA mimic protein YciU (109 aa).

It belongs to the putative dsDNA mimic protein family.

Its function is as follows. May act as a double-stranded DNA (dsDNA) mimic. Probably regulates the activity of a dsDNA-binding protein. This Salmonella arizonae (strain ATCC BAA-731 / CDC346-86 / RSK2980) protein is Putative double-stranded DNA mimic protein YciU.